A 170-amino-acid polypeptide reads, in one-letter code: Adenine phosphoribosyltransferase (170 aa).

Belongs to the purine/pyrimidine phosphoribosyltransferase family. Homodimer.

Its subcellular location is the cytoplasm. It catalyses the reaction AMP + diphosphate = 5-phospho-alpha-D-ribose 1-diphosphate + adenine. It participates in purine metabolism; AMP biosynthesis via salvage pathway; AMP from adenine: step 1/1. Its function is as follows. Catalyzes a salvage reaction resulting in the formation of AMP, that is energically less costly than de novo synthesis. The protein is Adenine phosphoribosyltransferase of Kosmotoga olearia (strain ATCC BAA-1733 / DSM 21960 / TBF 19.5.1).